We begin with the raw amino-acid sequence, 618 residues long: MSLSTVLSLSTQFAWLIPIYGFAGMVVSLPWATGWIQRNAPRTPAYLNLIISLVAFLHGSLALQDVLQNGAHIIRFPWLNLSQADLQLNISLDISPTNLAALELITGLSFIAQLYALGYLDKEWALARFFALAGFFEGAMSGVVLSDSLFQSYFLLEMLTLSTYLLVGFWYAQPLVVTAARDAFLTKRVGDVMLLMGVVALSAFAGGMEFEDLYTWADKNTLTPLATTLLGLALIAGPIGKCAQFPMHLWLDEAMEGPNPASILRNSVVVTCGAIVLMKLMPILHHSQITIAVLLAIGTISALGGSLVSIAQVDIKRTLSYSTTAYLGLVFIAIALEQPALALLTLFAHAIAKALLSMSIGSVIAVSNCQDITELGGLGSRMPATTSAYLIAGAGLTGLLPLGCFWCFGLGMDLIGRQAPWFASIYLITNTLTALNLTRVFRQVFLGAPMPKTRRAAEVNWQMALPMVVLLVAVALTPWMMARIDPLPGIGAFSAITGITVATSGLVGLTIGAIVPLNKAWSRSLNQPVRWVQDLLAFDFYTDRFYRLTIVNIVSGCSYIASWFDTAIVNGFVNYVGRFSMDSAEGLRLSISGRSQSYILTVVITIVFLLAALSWLVS.

17 helical membrane passes run 16 to 36 (LIPIYGFAGMVVSLPWATGWI), 43 to 63 (TPAYLNLIISLVAFLHGSLAL), 99 to 119 (LAALELITGLSFIAQLYALGY), 129 to 149 (FFALAGFFEGAMSGVVLSDSL), 152 to 172 (SYFLLEMLTLSTYLLVGFWYA), 190 to 210 (GDVMLLMGVVALSAFAGGMEF), 220 to 240 (NTLTPLATTLLGLALIAGPIG), 267 to 287 (SVVVTCGAIVLMKLMPILHHS), 291 to 311 (IAVLLAIGTISALGGSLVSIA), 318 to 335 (TLSYSTTAYLGLVFIAIA), 348 to 368 (AHAIAKALLSMSIGSVIAVSN), 390 to 410 (LIAGAGLTGLLPLGCFWCFGL), 419 to 438 (APWFASIYLITNTLTALNLT), 461 to 481 (WQMALPMVVLLVAVALTPWMM), 495 to 515 (AITGITVATSGLVGLTIGAIV), 553 to 573 (IVSGCSYIASWFDTAIVNGFV), and 597 to 617 (SYILTVVITIVFLLAALSWLV).

The protein belongs to the complex I subunit 5 family. As to quaternary structure, NDH is composed of at least 16 different subunits, 5 of which are encoded in the nucleus.

It is found in the plastid. The protein resides in the organellar chromatophore thylakoid membrane. The catalysed reaction is a plastoquinone + NADH + (n+1) H(+)(in) = a plastoquinol + NAD(+) + n H(+)(out). The enzyme catalyses a plastoquinone + NADPH + (n+1) H(+)(in) = a plastoquinol + NADP(+) + n H(+)(out). Its function is as follows. NDH shuttles electrons from NAD(P)H:plastoquinone, via FMN and iron-sulfur (Fe-S) centers, to quinones in the photosynthetic chain and possibly in a chloroplast respiratory chain. The immediate electron acceptor for the enzyme in this species is believed to be plastoquinone. Couples the redox reaction to proton translocation, and thus conserves the redox energy in a proton gradient. The protein is NAD(P)H-quinone oxidoreductase subunit 5, organellar chromatophore 2 (ndhF2) of Paulinella chromatophora.